The following is a 644-amino-acid chain: Exoribonuclease 2 (644 aa).

The region spanning 189 to 516 is the RNB domain; it reads REDLTALNFV…NHRLLKAMIT (328 aa). Positions 561–643 constitute an S1 motif domain; sequence DTRFTAEIID…ETRNVIARPV (83 aa).

This sequence belongs to the RNR ribonuclease family. RNase II subfamily.

It is found in the cytoplasm. It catalyses the reaction Exonucleolytic cleavage in the 3'- to 5'-direction to yield nucleoside 5'-phosphates.. In terms of biological role, involved in mRNA degradation. Hydrolyzes single-stranded polyribonucleotides processively in the 3' to 5' direction. The chain is Exoribonuclease 2 from Yersinia pestis bv. Antiqua (strain Antiqua).